Reading from the N-terminus, the 71-residue chain is UPF0346 protein SSU05_1322 (71 aa).

It belongs to the UPF0346 family.

This Streptococcus suis (strain 05ZYH33) protein is UPF0346 protein SSU05_1322.